The sequence spans 304 residues: NAD kinase (304 aa).

Residue Asp77 is the Proton acceptor of the active site. Residues 77–78, Arg82, 151–152, Arg162, Asp181, and 192–197 each bind NAD(+); these read DG, NE, and TAYSFS.

The protein belongs to the NAD kinase family. Requires a divalent metal cation as cofactor.

Its subcellular location is the cytoplasm. It catalyses the reaction NAD(+) + ATP = ADP + NADP(+) + H(+). Functionally, involved in the regulation of the intracellular balance of NAD and NADP, and is a key enzyme in the biosynthesis of NADP. Catalyzes specifically the phosphorylation on 2'-hydroxyl of the adenosine moiety of NAD to yield NADP. This Leifsonia xyli subsp. xyli (strain CTCB07) protein is NAD kinase.